Consider the following 525-residue polypeptide: Sodium-dependent lysophosphatidylcholine symporter 1 (525 aa).

Positions 1-29 (MEKESENASCAGLLGQKNEPGSPTQSRSG) are disordered. At 1 to 32 (MEKESENASCAGLLGQKNEPGSPTQSRSGKHK) the chain is on the cytoplasmic side. Residues 33–62 (LSVCSKICFAIGGAPYQITGCALGFFLQIF) traverse the membrane as a helical segment. Over 63-73 (LLDIAQVPPFY) the chain is Extracellular. The chain crosses the membrane as a helical span at residues 74 to 94 (ASIILFSGRVWDAITDPLVGF). Residues 95 to 106 (FVSKSSWTRLGR) are Cytoplasmic-facing. A helical transmembrane segment spans residues 107-126 (LLPWVVFSTPFAVVSYLLIW). The Extracellular segment spans residues 127–137 (FVPGFSGVSMV). Residues 138-162 (IWYLVFYCLFQTLVTCFHVPYSALT) traverse the membrane as a helical segment. At 163-169 (MFISKEQ) the chain is on the cytoplasmic side. A helical transmembrane segment spans residues 170–201 (SDRDSATGYRMTVEVLGTVLGTAIQGQIVGRE). Residues 202 to 226 (NTPCVEHIRETHLYNTSVIMEDLNI) are Extracellular-facing. Cys205 and Cys458 are oxidised to a cystine. N-linked (GlcNAc...) asparagine glycans are attached at residues Asn216 and Asn225. Residues 227-260 (THDVESLSSTRDAYMIAAGVICAIYVLCAIILTL) form a helical membrane-spanning segment. Residues 261–291 (GVREKRDAYELLSDQPFSFWQGLKLVMSHKP) are Cytoplasmic-facing. Residues 292–318 (YIKLITGFLFTSLAFMLLEGNFALFLT) traverse the membrane as a helical segment. The Extracellular segment spans residues 319–329 (YTMGFRRDFQN). A helical transmembrane segment spans residues 330–348 (ILLVVMLSATLTVPFWQWF). The Cytoplasmic portion of the chain corresponds to 349-352 (LTRF). Residues 353 to 374 (GKKTAVYFGISSVIPFLILVVL) form a helical membrane-spanning segment. Topologically, residues 375-377 (MES) are extracellular. Residues 378 to 414 (NLILAYVVAVAAGLSVAAAFLLPWSMLPDVIDDFILK) form a helical membrane-spanning segment. Residues 415–424 (NPDSHGHEPI) are Cytoplasmic-facing. The helical transmembrane segment at 425–451 (FFSFYVFFTKFASGVSLGISTLSLDFA) threads the bilayer. The Extracellular segment spans residues 452 to 463 (GYQTRACSQPEQ). Residues 464-487 (VNLTLKMLICVAPVILILLGLLLF) form a helical membrane-spanning segment. Residues 488-525 (ILYPINEEKRKQNKKALQLIRESNRDSDSDSLELASNV) are Cytoplasmic-facing.

The protein belongs to the major facilitator superfamily.

It localises to the cell membrane. It is found in the endoplasmic reticulum membrane. It catalyses the reaction a 1-acyl-sn-glycero-3-phosphocholine(in) + Na(+)(in) = a 1-acyl-sn-glycero-3-phosphocholine(out) + Na(+)(out). The enzyme catalyses 1-(4Z,7Z,10Z,13Z,16Z,19Z-docosahexaenoyl)-sn-glycero-3-phosphocholine(in) + Na(+)(in) = 1-(4Z,7Z,10Z,13Z,16Z,19Z-docosahexaenoyl)-sn-glycero-3-phosphocholine(out) + Na(+)(out). The catalysed reaction is 1-(9Z-octadecenoyl)-sn-glycero-3-phosphocholine(in) + Na(+)(in) = 1-(9Z-octadecenoyl)-sn-glycero-3-phosphocholine(out) + Na(+)(out). It carries out the reaction 1-hexadecanoyl-sn-glycero-3-phosphocholine(in) + Na(+)(in) = 1-hexadecanoyl-sn-glycero-3-phosphocholine(out) + Na(+)(out). It catalyses the reaction a 1-acyl-sn-glycero-3-phosphoethanolamine(in) + Na(+)(in) = a 1-acyl-sn-glycero-3-phosphoethanolamine(out) + Na(+)(out). Functionally, sodium-dependent lysophosphatidylcholine (LPC) symporter, which plays an essential role for blood-brain barrier formation and function. Specifically expressed in endothelium of the blood-brain barrier of micro-vessels and transports LPC into the brain. Transport of LPC is essential because it constitutes the major mechanism by which docosahexaenoic acid (DHA), an omega-3 fatty acid that is essential for normal brain growth and cognitive function, enters the brain. Transports LPC carrying long-chain fatty acids such LPC oleate and LPC palmitate with a minimum acyl chain length of 14 carbons. Does not transport docosahexaenoic acid in unesterified fatty acid. This is Sodium-dependent lysophosphatidylcholine symporter 1 (mfsd2a) from Xenopus tropicalis (Western clawed frog).